Reading from the N-terminus, the 168-residue chain is Protein-export protein SecB (168 aa).

Belongs to the SecB family. In terms of assembly, homotetramer, a dimer of dimers. One homotetramer interacts with 1 SecA dimer.

It is found in the cytoplasm. Functionally, one of the proteins required for the normal export of preproteins out of the cell cytoplasm. It is a molecular chaperone that binds to a subset of precursor proteins, maintaining them in a translocation-competent state. It also specifically binds to its receptor SecA. The polypeptide is Protein-export protein SecB (Thioalkalivibrio sulfidiphilus (strain HL-EbGR7)).